The sequence spans 328 residues: D-cysteine desulfhydrase (328 aa).

Lys51 is subject to N6-(pyridoxal phosphate)lysine.

Belongs to the ACC deaminase/D-cysteine desulfhydrase family. In terms of assembly, homodimer. Requires pyridoxal 5'-phosphate as cofactor.

It catalyses the reaction D-cysteine + H2O = hydrogen sulfide + pyruvate + NH4(+) + H(+). Catalyzes the alpha,beta-elimination reaction of D-cysteine and of several D-cysteine derivatives. It could be a defense mechanism against D-cysteine. The sequence is that of D-cysteine desulfhydrase from Salmonella agona (strain SL483).